A 150-amino-acid polypeptide reads, in one-letter code: Profilin (150 aa).

Belongs to the profilin family. As to quaternary structure, occurs in many kinds of cells as a complex with monomeric actin in a 1:1 ratio.

It is found in the cytoplasm. Its subcellular location is the cytoskeleton. Functionally, binds to actin and affects the structure of the cytoskeleton. At high concentrations, profilin prevents the polymerization of actin, whereas it enhances it at low concentrations. By binding to PIP2, it inhibits the formation of IP3 and DG. This chain is Profilin, found in Trypanosoma brucei brucei.